The primary structure comprises 633 residues: Threonine--tRNA ligase (633 aa).

Residues 1–61 (MINITLPDGS…DHDASLRIIT (61 aa)) enclose the TGS domain. The segment at 243 to 534 (DHRRIGKQQD…LIEHHAGQFP (292 aa)) is catalytic. Zn(2+)-binding residues include Cys-334, His-385, and His-511.

Belongs to the class-II aminoacyl-tRNA synthetase family. Homodimer. Zn(2+) is required as a cofactor.

The protein resides in the cytoplasm. The enzyme catalyses tRNA(Thr) + L-threonine + ATP = L-threonyl-tRNA(Thr) + AMP + diphosphate + H(+). Its function is as follows. Catalyzes the attachment of threonine to tRNA(Thr) in a two-step reaction: L-threonine is first activated by ATP to form Thr-AMP and then transferred to the acceptor end of tRNA(Thr). Also edits incorrectly charged L-seryl-tRNA(Thr). This Stenotrophomonas maltophilia (strain R551-3) protein is Threonine--tRNA ligase.